The following is a 106-amino-acid chain: Transcription initiation factor IIA subunit 2 (106 aa).

It belongs to the TFIIA subunit 2 family. TFIIA is a heterodimer of the large unprocessed subunit 1 and a small subunit gamma. It was originally believed to be a heterotrimer of an alpha, a beta and a gamma subunit.

The protein resides in the nucleus. Its function is as follows. TFIIA is a component of the transcription machinery of RNA polymerase II and plays an important role in transcriptional activation. TFIIA in a complex with TBP mediates transcriptional activity. The sequence is that of Transcription initiation factor IIA subunit 2 (TFIIA-S) from Arabidopsis thaliana (Mouse-ear cress).